The sequence spans 418 residues: 3-deoxy-D-manno-octulosonic acid transferase (418 aa).

A helical; Signal-anchor transmembrane segment spans residues Phe-7–Gly-27. The active-site Proton acceptor is the Glu-60. CMP is bound by residues Pro-264–Arg-265, Phe-305–Glu-307, and Asn-330–Glu-333.

It belongs to the glycosyltransferase group 1 family. Glycosyltransferase 30 subfamily.

It localises to the cell inner membrane. The catalysed reaction is lipid IVA (E. coli) + CMP-3-deoxy-beta-D-manno-octulosonate = alpha-Kdo-(2-&gt;6)-lipid IVA (E. coli) + CMP + H(+). The protein operates within bacterial outer membrane biogenesis; LPS core biosynthesis. Functionally, involved in lipopolysaccharide (LPS) biosynthesis. Catalyzes the transfer of 3-deoxy-D-manno-octulosonate (Kdo) residue(s) from CMP-Kdo to lipid IV(A), the tetraacyldisaccharide-1,4'-bisphosphate precursor of lipid A. This is 3-deoxy-D-manno-octulosonic acid transferase (waaA) from Rickettsia bellii (strain RML369-C).